The primary structure comprises 433 residues: Transcription factor TCP18 (433 aa).

Disordered stretches follow at residues 130 to 163 (QRIS…GTRD) and 247 to 281 (DDRG…RTPI). Residues 148-206 (RTDRHSKIKTAKGTRDRRMRLSLDVAKELFGLQDMLGFDKASKTVEWLLTQAKPEIIKI) form the TCP domain. A R domain is found at 287 to 304 (KEERAKARERAKGRTMEK).

Expressed in unelongated axillary buds, and, to a lower extent, in axillary structures such as flowers and siliques.

It localises to the nucleus. Its function is as follows. Transcription factor that prevents axillary bud outgrowth and delays early axillary bud development. Indirectly required for the auxin-induced control of apical dominance. This Arabidopsis thaliana (Mouse-ear cress) protein is Transcription factor TCP18.